Consider the following 389-residue polypeptide: SH2 domain-containing protein 2A (389 aa).

Residues 41–63 are disordered; the sequence is AASPQAPEAASNTGNAERAEEVP. An SH2 domain is found at 95 to 186; that stretch reads WFHGFITRRE…PYGETLTEPL (92 aa). The disordered stretch occupies residues 190-295; that stretch reads TPEPAGLSLR…PIAFYAMGRG (106 aa). Positions 203–216 are enriched in polar residues; it reads SNFGSKSQDPNPQY. Position 217 is a phosphoserine (S217). Short sequence motifs (SH3-binding) lie at residues 244–250 and 272–278; these read RPKPPIP and RPKPSNP. The segment covering 245 to 256 has biased composition (pro residues); sequence PKPPIPAKPQLP. Phosphoserine is present on S296. The tract at residues 324 to 389 is disordered; sequence KSWSRPVPGG…QAWLPLGPPQ (66 aa). Polar residues predominate over residues 337–348; that stretch reads GGSQLHSENSVI. A compositionally biased stretch (pro residues) spans 352 to 361; the sequence is PPLPHQPPPA.

Interacts with KDR. Interacts with TXK and ITK. Post-translationally, phosphorylated on tyrosine residues. As to expression, expression limited to tissues of the immune system and, in particular, activated T-cells. Expressed in peripheral blood leukocytes, thymus and spleen. Much lower expression or undetectable, in brain, placenta, skeletal muscle, prostate, testis, ovary, small intestine, and colon. Expressed at low levels in unstimulated T-cells, but not expressed in normal resting or activated B-cells. According to PubMed:10692392, expression is not restricted to activated T-cells, but strongly expressed in blood cell lineages, the endothelium and other cell and tissue types, such as heart, lung, and liver.

It localises to the cytoplasm. Functionally, could be a T-cell-specific adapter protein involved in the control of T-cell activation. May play a role in the CD4-p56-LCK-dependent signal transduction pathway. Could also play an important role in normal and pathological angiogenesis. Could be an adapter protein that facilitates and regulates interaction of KDR with effector proteins important to endothelial cell survival and proliferation. The polypeptide is SH2 domain-containing protein 2A (SH2D2A) (Homo sapiens (Human)).